A 368-amino-acid chain; its full sequence is Isocitrate dehydrogenase [NAD] regulatory subunit 3, mitochondrial (368 aa).

Residues 1–26 (MARRSVSIFNRLLANPPSPFTSLSRS) constitute a mitochondrion transit peptide.

It belongs to the isocitrate and isopropylmalate dehydrogenases family. In terms of assembly, heterooligomer of catalytic and regulatory subunits. Interacts with 14-3-3-like proteins GRF1 GRF3 and GRF8. As to expression, mainly expressed at a low level in pollen.

The protein resides in the mitochondrion. Performs an essential role in the oxidative function of the citric acid cycle. The chain is Isocitrate dehydrogenase [NAD] regulatory subunit 3, mitochondrial (IDH3) from Arabidopsis thaliana (Mouse-ear cress).